A 2399-amino-acid chain; its full sequence is Protein DOP1A (2399 aa).

Disordered regions lie at residues 556-598, 619-660, 1105-1124, 1166-1188, 1234-1263, and 1279-1308; these read PSGQ…SSES, NGQG…GAAG, SDSG…EVDP, SVTS…PGKE, SPCI…HSSI, and ETIV…KKKA. Low complexity-rich tracts occupy residues 629–647 and 1105–1116; these read GSTS…EETV and SDSGCSQSSAGD. 2 stretches are compositionally biased toward polar residues: residues 1166 to 1180 and 1234 to 1252; these read SVTS…QTKS and SPCI…VPSE. Residue S1261 is modified to Phosphoserine.

It belongs to the DOP1 family.

It localises to the golgi apparatus membrane. In terms of biological role, may be involved in protein traffic between late Golgi and early endosomes. The polypeptide is Protein DOP1A (Dop1a) (Mus musculus (Mouse)).